Reading from the N-terminus, the 175-residue chain is Nucleoside triphosphate/diphosphate phosphatase (175 aa).

Catalysis depends on R23, which acts as the Proton donor. Mg(2+) is bound by residues N87, D103, D105, D107, D120, and E123.

Belongs to the Ntdp family. Mg(2+) is required as a cofactor.

The enzyme catalyses a ribonucleoside 5'-triphosphate + H2O = a ribonucleoside 5'-diphosphate + phosphate + H(+). It catalyses the reaction a ribonucleoside 5'-diphosphate + H2O = a ribonucleoside 5'-phosphate + phosphate + H(+). In terms of biological role, has nucleoside phosphatase activity towards nucleoside triphosphates and nucleoside diphosphates. The chain is Nucleoside triphosphate/diphosphate phosphatase from Shouchella clausii (strain KSM-K16) (Alkalihalobacillus clausii).